Consider the following 220-residue polypeptide: Deoxyribose-phosphate aldolase (220 aa).

D89 (proton donor/acceptor) is an active-site residue. K151 serves as the catalytic Schiff-base intermediate with acetaldehyde. K180 (proton donor/acceptor) is an active-site residue.

It belongs to the DeoC/FbaB aldolase family. DeoC type 1 subfamily.

It localises to the cytoplasm. The catalysed reaction is 2-deoxy-D-ribose 5-phosphate = D-glyceraldehyde 3-phosphate + acetaldehyde. It participates in carbohydrate degradation; 2-deoxy-D-ribose 1-phosphate degradation; D-glyceraldehyde 3-phosphate and acetaldehyde from 2-deoxy-alpha-D-ribose 1-phosphate: step 2/2. Catalyzes a reversible aldol reaction between acetaldehyde and D-glyceraldehyde 3-phosphate to generate 2-deoxy-D-ribose 5-phosphate. This Streptococcus equi subsp. equi (strain 4047) protein is Deoxyribose-phosphate aldolase.